The primary structure comprises 1436 residues: Non-structural polyprotein 1AB (1436 aa).

Residues 104–142 are a coiled coil; it reads KLIHKANALQERLRLSQEEKATLALDVQFLQHENVRLKE. A run of 5 helical transmembrane segments spans residues 156–176, 239–259, 286–306, 313–333, and 344–364; these read WIIM…YAHS, VFYY…LAIG, VLPT…TLMV, LLAI…LCFM, and GLIA…LTGT. Active-site charge relay system; for serine protease activity residues include His461, Asp489, and Ser551. The stretch at 587 to 620 forms a coiled coil; it reads VKAPSQVELLKEEIERLKAQLNSATENATTVVTQ. At Tyr693 the chain carries O-(5'-phospho-RNA)-tyrosine. 2 disordered regions span residues 756–828 and 913–934; these read AKPI…YSQT and SKNK…EDQG. The RdRp catalytic domain maps to 1181-1307; that stretch reads KHFIEFDWTR…TTPSVPDDYE (127 aa).

It belongs to the astroviridae polyprotein 1AB family. As to quaternary structure, monomer. Post-translationally, cleaved by the viral and host proteases. The protease is probably autocatalytically cleaved.

The protein localises to the host membrane. The catalysed reaction is RNA(n) + a ribonucleoside 5'-triphosphate = RNA(n+1) + diphosphate. Responsible for the cleavage of the polyprotein into functional products. Its function is as follows. Protein covalently attached to the 5' extremity of the genomic and subgenomic RNAs. It may serve as a primer for the replicase. The protein is Non-structural polyprotein 1AB (ORF1) of Homo sapiens (Human).